The chain runs to 609 residues: QWRF motif-containing protein 4 (609 aa).

2 disordered regions span residues 1-227 (MQVG…IRGN) and 271-369 (EVSS…TAQS). Composition is skewed to polar residues over residues 11-21 (GKQQQSVSDAT) and 46-57 (EVSSRYRSPTPT). Low complexity-rich tracts occupy residues 98–110 (PVSD…PVSS) and 129–143 (SLSV…SVPV). A compositionally biased stretch (polar residues) spans 151 to 180 (VTSSTDRTLRPSSSNIAHKQQSETTSVTRK). Low complexity-rich tracts occupy residues 271-285 (EVSS…SSTE) and 302-332 (SAPG…PSRG). The short motif at 407–410 (QWRF) is the QWRF motif element. The interval 588-609 (EEEVRDDAESSPLLPLSKFQWP) is disordered.

It belongs to the QWRF family.

In Arabidopsis thaliana (Mouse-ear cress), this protein is QWRF motif-containing protein 4 (QWRF4).